Consider the following 278-residue polypeptide: Probable aquaporin PIP2-8 (278 aa).

Residue M1 is modified to N-acetylmethionine. At 1–36 (MSKEVSEEGRHGKDYVDPPPAPLLDMAELKLWSFYR) the chain is on the cytoplasmic side. K3 is subject to N6,N6-dimethyllysine. The helical transmembrane segment at 37-57 (AIIAEFIATLLFLYVTVATVI) threads the bilayer. At 58-74 (GHKNQTGPCGGVGLLGI) the chain is on the extracellular side. The chain crosses the membrane as a helical span at residues 75–95 (AWAFGGMIFVLVYCTAGISGG). At 96–116 (HINPAVTFGLFLARKVSLPRA) the chain is on the cytoplasmic side. The short motif at 98–100 (NPA) is the NPA 1 element. The chain crosses the membrane as a helical span at residues 117–137 (VAYMVAQCLGAICGVGLVKAF). The Extracellular portion of the chain corresponds to 138–158 (MMTPYKRLGGGANTVADGYST). Residues 159–179 (GTALGAEIIGTFVLVYTVFSA) traverse the membrane as a helical segment. The Cytoplasmic segment spans residues 180 to 192 (TDPKRSARDSHVP). The chain crosses the membrane as a helical span at residues 193 to 213 (VLAPLPIGFAVFMVHLATIPI). Residues 214–240 (TGTGINPARSFGAAVIYNNEKAWDDHW) are Extracellular-facing. An NPA 2 motif is present at residues 219 to 221 (NPA). A helical membrane pass occupies residues 241-261 (IFWVGPFVGALAAAAYHQYIL). Topologically, residues 262–278 (RAAAIKALASFRSNPTN) are cytoplasmic. Phosphoserine occurs at positions 271 and 274.

It belongs to the MIP/aquaporin (TC 1.A.8) family. PIP (TC 1.A.8.11) subfamily. As to expression, expressed in roots and floral buds.

Its subcellular location is the cell membrane. Its function is as follows. Aquaporins facilitate the transport of water and small neutral solutes across cell membranes. The polypeptide is Probable aquaporin PIP2-8 (PIP2-8) (Arabidopsis thaliana (Mouse-ear cress)).